The primary structure comprises 398 residues: tRNA-specific 2-thiouridylase MnmA (398 aa).

ATP contacts are provided by residues 18–25 (AMSGGVDS) and Leu-44. Cys-112 functions as the Nucleophile in the catalytic mechanism. Cys-112 and Cys-213 form a disulfide bridge. Gly-136 is a binding site for ATP. The interaction with tRNA stretch occupies residues 163-165 (RDQ). Cys-213 serves as the catalytic Cysteine persulfide intermediate.

Belongs to the MnmA/TRMU family.

It is found in the cytoplasm. It carries out the reaction S-sulfanyl-L-cysteinyl-[protein] + uridine(34) in tRNA + AH2 + ATP = 2-thiouridine(34) in tRNA + L-cysteinyl-[protein] + A + AMP + diphosphate + H(+). In terms of biological role, catalyzes the 2-thiolation of uridine at the wobble position (U34) of tRNA, leading to the formation of s(2)U34. The chain is tRNA-specific 2-thiouridylase MnmA from Sinorhizobium medicae (strain WSM419) (Ensifer medicae).